The following is a 197-amino-acid chain: Molybdenum cofactor guanylyltransferase (197 aa).

Residues 10-12 (LAG), Lys-23, Asn-51, Asp-69, and Asp-99 contribute to the GTP site. Asp-99 is a binding site for Mg(2+).

Belongs to the MobA family. In terms of assembly, monomer. The cofactor is Mg(2+).

The protein localises to the cytoplasm. The enzyme catalyses Mo-molybdopterin + GTP + H(+) = Mo-molybdopterin guanine dinucleotide + diphosphate. Its function is as follows. Transfers a GMP moiety from GTP to Mo-molybdopterin (Mo-MPT) cofactor (Moco or molybdenum cofactor) to form Mo-molybdopterin guanine dinucleotide (Mo-MGD) cofactor. The chain is Molybdenum cofactor guanylyltransferase from Shewanella sp. (strain ANA-3).